The primary structure comprises 310 residues: Ribosomal RNA small subunit methyltransferase H (310 aa).

Residues 33-35, Asp52, Phe79, Asp98, and Gln105 each bind S-adenosyl-L-methionine; that span reads GGH.

This sequence belongs to the methyltransferase superfamily. RsmH family.

The protein localises to the cytoplasm. It catalyses the reaction cytidine(1402) in 16S rRNA + S-adenosyl-L-methionine = N(4)-methylcytidine(1402) in 16S rRNA + S-adenosyl-L-homocysteine + H(+). Specifically methylates the N4 position of cytidine in position 1402 (C1402) of 16S rRNA. This Campylobacter jejuni subsp. jejuni serotype O:23/36 (strain 81-176) protein is Ribosomal RNA small subunit methyltransferase H.